The primary structure comprises 206 residues: MMSFEEEQLRDHAVVNLYRIGAIRFGDFILSDGKKTPIYVDMRLVISCPDVLQTIASLIWRLRPSFNSSLLCGVPYTALTLATCISLKYNISMVLRRKELKHPNQEDKIKVEGLFSPGQTCLVINDVIASGRSILDTAKALEDEGLNIRESLVFLDRQVGGADALKEAGIKLRSVFTLEELVKALLSKCQLSETDAAIARTLLETF.

Residues arginine 97, lysine 98, lysine 101, and asparagine 125–serine 133 each bind 5-phospho-alpha-D-ribose 1-diphosphate. Arginine 157 provides a ligand contact to orotate.

The protein belongs to the purine/pyrimidine phosphoribosyltransferase family. PyrE subfamily. In terms of assembly, homodimer. Requires Mg(2+) as cofactor.

The catalysed reaction is orotidine 5'-phosphate + diphosphate = orotate + 5-phospho-alpha-D-ribose 1-diphosphate. It functions in the pathway pyrimidine metabolism; UMP biosynthesis via de novo pathway; UMP from orotate: step 1/2. Functionally, catalyzes the transfer of a ribosyl phosphate group from 5-phosphoribose 1-diphosphate to orotate, leading to the formation of orotidine monophosphate (OMP). The sequence is that of Orotate phosphoribosyltransferase from Chlamydia caviae (strain ATCC VR-813 / DSM 19441 / 03DC25 / GPIC) (Chlamydophila caviae).